We begin with the raw amino-acid sequence, 375 residues long: MGSIEIPNCSGSIVYKTISDFIDFPDHEQKLWWHSTAPMFAEMLRVAGYDLHSQYKILGIFLNHVIPFLGVYPTRINNRWLSILTRYGTPFELSLNCSQSLVRYTYEPINSATGTVKDPFNTHSIWDALDRLMPLQKGIDLEFFKHLKQDLTVDDQDSAYLLENNLVGGQIRTQNKLALDLKGGNFVLKTYIYPALKALATGKSIKTLMFDSVYRLCRQNPSLEAPLRALEEYVDSKGPNSTASPRLLSCDLIDPSKSRVKIYILELNVTLEAMEDLWTMGGRLNDASTLAGLEMLRELWDLIKLPPGMREYPEPFLQLGTIPDEQLPLMANYTLHHDQAMPEPQVYFTTFGLNDGRVADGLVTFFERRGWNHMA.

Residues 83–84 (IL) and Glu-92 each bind L-tryptophan. Arg-103, Lys-189, and Tyr-191 together coordinate substrate. L-tryptophan is bound by residues Tyr-193 and Arg-246. 5 residues coordinate substrate: Arg-259, Lys-261, Tyr-263, Gln-345, and Tyr-347.

Belongs to the tryptophan dimethylallyltransferase family. In terms of assembly, homodimer.

It catalyses the reaction L-tryptophan + dimethylallyl diphosphate = 4-(3-methylbut-2-enyl)-L-tryptophan + diphosphate. Its pathway is alkaloid biosynthesis; ergot alkaloid biosynthesis. Tryptophan dimethylallyltransferase; part of the gene cluster that mediates the biosynthesis of fungal ergot alkaloid. DmaW catalyzes the first step of ergot alkaloid biosynthesis by condensing dimethylallyl diphosphate (DMAP) and tryptophan to form 4-dimethylallyl-L-tryptophan. The second step is catalyzed by the methyltransferase easF that methylates 4-dimethylallyl-L-tryptophan in the presence of S-adenosyl-L-methionine, resulting in the formation of 4-dimethylallyl-L-abrine. The catalase easC and the FAD-dependent oxidoreductase easE then transform 4-dimethylallyl-L-abrine to chanoclavine-I which is further oxidized by easD in the presence of NAD(+), resulting in the formation of chanoclavine-I aldehyde. Chanoclavine-I aldehyde is the precursor of ergoamides and ergopeptines in Clavicipitaceae, and clavine-type alcaloids such as fumiclavine in Trichocomaceae. However, the metabolites downstream of chanoclavine-I aldehyde in Arthrodermataceae have not been identified yet. The sequence is that of Tryptophan dimethylallyltransferase from Trichophyton verrucosum (strain HKI 0517).